Consider the following 204-residue polypeptide: Altered inheritance of mitochondria protein 20 (204 aa).

The helical transmembrane segment at V6–F26 threads the bilayer.

It belongs to the SKG1 family.

It is found in the vacuole membrane. Involved in cell cycle progression and surviving DNA damage. This chain is Altered inheritance of mitochondria protein 20 (AIM20), found in Saccharomyces cerevisiae (strain RM11-1a) (Baker's yeast).